The following is a 488-amino-acid chain: Regulatory protein ViaA (488 aa).

It belongs to the ViaA family. In terms of assembly, homodimer. Interacts with RavA.

Its subcellular location is the cytoplasm. In terms of biological role, component of the RavA-ViaA chaperone complex, which may act on the membrane to optimize the function of some of the respiratory chains. ViaA stimulates the ATPase activity of RavA. This chain is Regulatory protein ViaA, found in Yersinia pseudotuberculosis serotype O:1b (strain IP 31758).